The chain runs to 220 residues: NAD(P)H-quinone oxidoreductase subunit M, chloroplastic (220 aa).

Residues 1–37 constitute a chloroplast transit peptide; sequence MATTASPFLSPAKLSLERRLPRATWTARRSVRFPPVR. The tract at residues 20 to 91 is disordered; that stretch reads LPRATWTARR…PVQPLAESKN (72 aa). Residues 34–44 are compositionally biased toward low complexity; that stretch reads PPVRAQDQQQQ.

Belongs to the NDH complex subunit M family. As to quaternary structure, part of the chloroplast NDH complex, composed of a mixture of chloroplast and nucleus encoded subunits. Component of the NDH subcomplex A, at least composed of ndhH, ndhI, ndhJ, ndhK, ndhL, ndhM, ndhN and ndhO.

The protein localises to the plastid. Its subcellular location is the chloroplast thylakoid membrane. The enzyme catalyses a plastoquinone + NADH + (n+1) H(+)(in) = a plastoquinol + NAD(+) + n H(+)(out). The catalysed reaction is a plastoquinone + NADPH + (n+1) H(+)(in) = a plastoquinol + NADP(+) + n H(+)(out). NDH shuttles electrons from NAD(P)H:plastoquinone, via FMN and iron-sulfur (Fe-S) centers, to quinones in the photosynthetic chain and possibly in a chloroplast respiratory chain. The immediate electron acceptor for the enzyme in this species is believed to be plastoquinone. Couples the redox reaction to proton translocation, and thus conserves the redox energy in a proton gradient. The chain is NAD(P)H-quinone oxidoreductase subunit M, chloroplastic from Oryza sativa subsp. indica (Rice).